Reading from the N-terminus, the 201-residue chain is Retinol-binding protein 4 (201 aa).

The N-terminal stretch at 1–18 (MEWVWALVLLAALGGGSA) is a signal peptide. 3 disulfides stabilise this stretch: C22/C178, C88/C192, and C138/C147. Q116 provides a ligand contact to substrate. R139 bears the Omega-N-methylarginine mark.

It belongs to the calycin superfamily. Lipocalin family. Interacts with TTR. Interaction with TTR prevents its loss by filtration through the kidney glomeruli. Interacts with STRA6.

The protein localises to the secreted. Retinol-binding protein that mediates retinol transport in blood plasma. Delivers retinol from the liver stores to the peripheral tissues. Transfers the bound all-trans retinol to STRA6, that then facilitates retinol transport across the cell membrane. This chain is Retinol-binding protein 4 (Rbp4), found in Mus musculus (Mouse).